We begin with the raw amino-acid sequence, 313 residues long: Protoheme IX farnesyltransferase (313 aa).

The next 8 helical transmembrane spans lie at 34 to 54 (VIELLLVTTIPAMLLADRGTV), 56 to 76 (PLLIINTLVGGLLAAAGANTL), 105 to 125 (HALIFGLTLSVASFFWLWSTT), 128 to 148 (LSAHLAGATIAFYVLVYTLLL), 152 to 172 (TSQNVVWGGAAGCMPVMIGWS), 173 to 193 (AVTGTIQWPALVMFLIIFFWT), 237 to 257 (VLATLALALTTGWLYASVAIL), and 291 to 311 (YLAVVFVALAVDSALALPTLL).

The protein belongs to the UbiA prenyltransferase family. Protoheme IX farnesyltransferase subfamily.

It localises to the cell membrane. The catalysed reaction is heme b + (2E,6E)-farnesyl diphosphate + H2O = Fe(II)-heme o + diphosphate. The protein operates within porphyrin-containing compound metabolism; heme O biosynthesis; heme O from protoheme: step 1/1. Converts heme B (protoheme IX) to heme O by substitution of the vinyl group on carbon 2 of heme B porphyrin ring with a hydroxyethyl farnesyl side group. This is Protoheme IX farnesyltransferase from Mycolicibacterium gilvum (strain PYR-GCK) (Mycobacterium gilvum (strain PYR-GCK)).